The primary structure comprises 277 residues: Diaminopimelate epimerase (277 aa).

Substrate-binding residues include Asn-15 and Asn-74. Cys-83 (proton donor) is an active-site residue. Residues 84-85 (GN), Asn-159, Asn-194, and 212-213 (ER) each bind substrate. Cys-221 acts as the Proton acceptor in catalysis. 222–223 (GT) is a binding site for substrate.

This sequence belongs to the diaminopimelate epimerase family. Homodimer.

The protein resides in the cytoplasm. It catalyses the reaction (2S,6S)-2,6-diaminopimelate = meso-2,6-diaminopimelate. It participates in amino-acid biosynthesis; L-lysine biosynthesis via DAP pathway; DL-2,6-diaminopimelate from LL-2,6-diaminopimelate: step 1/1. Catalyzes the stereoinversion of LL-2,6-diaminopimelate (L,L-DAP) to meso-diaminopimelate (meso-DAP), a precursor of L-lysine and an essential component of the bacterial peptidoglycan. Involved in the succinylase branch of the diaminopimelate biosynthesis. The polypeptide is Diaminopimelate epimerase (Corynebacterium glutamicum (strain ATCC 13032 / DSM 20300 / JCM 1318 / BCRC 11384 / CCUG 27702 / LMG 3730 / NBRC 12168 / NCIMB 10025 / NRRL B-2784 / 534)).